The sequence spans 517 residues: Crotonobetaine/carnitine--CoA ligase (517 aa).

The protein belongs to the ATP-dependent AMP-binding enzyme family.

The catalysed reaction is 4-(trimethylamino)butanoate + ATP + CoA = 4-(trimethylamino)butanoyl-CoA + AMP + diphosphate. The enzyme catalyses crotonobetaine + ATP + CoA = crotonobetainyl-CoA + AMP + diphosphate. It carries out the reaction (R)-carnitine + ATP + CoA = (R)-carnitinyl-CoA + AMP + diphosphate. The protein operates within amine and polyamine metabolism; carnitine metabolism. Functionally, catalyzes the transfer of CoA to carnitine, generating the initial carnitinyl-CoA needed for the CaiB reaction cycle. Also has activity toward crotonobetaine and gamma-butyrobetaine. This is Crotonobetaine/carnitine--CoA ligase from Escherichia coli O8 (strain IAI1).